Here is a 247-residue protein sequence, read N- to C-terminus: Probable chemoreceptor glutamine deamidase CheD (247 aa).

Residues 204-247 (KRPAAPQPARPRIELFGGRGTAPGAGSPSAGSPYAANLSRKQEA) form a disordered region. The segment covering 227 to 239 (GAGSPSAGSPYAA) has biased composition (low complexity).

The protein belongs to the CheD family.

The enzyme catalyses L-glutaminyl-[protein] + H2O = L-glutamyl-[protein] + NH4(+). Probably deamidates glutamine residues to glutamate on methyl-accepting chemotaxis receptors (MCPs), playing an important role in chemotaxis. This Burkholderia orbicola (strain AU 1054) protein is Probable chemoreceptor glutamine deamidase CheD.